The following is a 259-amino-acid chain: Undecaprenyl-diphosphatase 4 (259 aa).

The next 8 membrane-spanning stretches (helical) occupy residues M1 to I21, A39 to Y59, F71 to L91, I99 to V119, I133 to I153, A173 to F193, S208 to I228, and F239 to F259.

This sequence belongs to the UppP family.

It localises to the cell membrane. The enzyme catalyses di-trans,octa-cis-undecaprenyl diphosphate + H2O = di-trans,octa-cis-undecaprenyl phosphate + phosphate + H(+). Catalyzes the dephosphorylation of undecaprenyl diphosphate (UPP). Confers resistance to bacitracin. The sequence is that of Undecaprenyl-diphosphatase 4 from Bacillus thuringiensis subsp. konkukian (strain 97-27).